The sequence spans 125 residues: Large ribosomal subunit protein bL12 (125 aa).

Belongs to the bacterial ribosomal protein bL12 family. In terms of assembly, homodimer. Part of the ribosomal stalk of the 50S ribosomal subunit. Forms a multimeric L10(L12)X complex, where L10 forms an elongated spine to which 2 to 4 L12 dimers bind in a sequential fashion. Binds GTP-bound translation factors.

In terms of biological role, forms part of the ribosomal stalk which helps the ribosome interact with GTP-bound translation factors. Is thus essential for accurate translation. This Methylibium petroleiphilum (strain ATCC BAA-1232 / LMG 22953 / PM1) protein is Large ribosomal subunit protein bL12.